The chain runs to 239 residues: Small ribosomal subunit protein uS3 (239 aa).

A KH type-2 domain is found at 39 to 107 (VRQVLRKKMS…PVHINVIEVR (69 aa)). Residues 214-239 (SQEKQDDGSRGDRNADRSSRRSREVR) are disordered. The span at 216–239 (EKQDDGSRGDRNADRSSRRSREVR) shows a compositional bias: basic and acidic residues.

Belongs to the universal ribosomal protein uS3 family. As to quaternary structure, part of the 30S ribosomal subunit. Forms a tight complex with proteins S10 and S14.

Its function is as follows. Binds the lower part of the 30S subunit head. Binds mRNA in the 70S ribosome, positioning it for translation. In Xylella fastidiosa (strain M23), this protein is Small ribosomal subunit protein uS3.